The following is a 1059-amino-acid chain: Dihydropyrimidine dehydrogenase [NADP(+)] (1059 aa).

Residues 84-118 enclose the 4Fe-4S ferredoxin-type 1 domain; sequence ERGALKEAMRCLKCADAPCQKSCPTQLDVKSFITS. The [4Fe-4S] cluster site is built by Cys-94, Cys-97, Cys-102, Cys-106, Cys-145, Cys-151, Cys-155, and Gln-171. FAD is bound by residues 207 to 211, 231 to 239, Arg-248, and Leu-274; these read GCGPA and EKRAYIGGL. Residues 354–357, 378–379, Arg-385, 451–453, and 495–501 contribute to the NADP(+) site; these read AGDT, RK, AFG, and DVAGVAE. FAD is bound at residue 494–503; that stretch reads GDVAGVAETT. Residues Ser-564 and 588–589 each bind FMN; that span reads KT. Residues Asn-623 and 682-684 each bind substrate; that span reads NLS. The Proton acceptor role is filled by Cys-685. Lys-723 lines the FMN pocket. Residue 750–751 coordinates substrate; that stretch reads NT. FMN contacts are provided by residues Gly-781, 807-809, and 830-831; these read TGG and CS. 4Fe-4S ferredoxin-type domains follow at residues 955–987 and 989–1019; these read KVAIIDDDMCINCGKCYMTCNDSGYQAITFDPV and HQPHVTEDDCTGCTLCYSVCPIPECIEMVPR. [4Fe-4S] cluster-binding residues include Cys-964, Cys-967, Cys-970, Cys-974, Cys-998, Cys-1001, Cys-1004, and Cys-1008.

Belongs to the dihydropyrimidine dehydrogenase family. [4Fe-4S] cluster is required as a cofactor. Requires FAD as cofactor. The cofactor is FMN.

It carries out the reaction 5,6-dihydrouracil + NADP(+) = uracil + NADPH + H(+). Its pathway is amino-acid biosynthesis; beta-alanine biosynthesis. Its function is as follows. Involved in pyrimidine base degradation. Catalyzes the reduction of uracil and thymine. Involved in the degradation of the chemotherapeutic drug 5-fluorouracil. This is Dihydropyrimidine dehydrogenase [NADP(+)] (dpyd-1) from Caenorhabditis elegans.